We begin with the raw amino-acid sequence, 166 residues long: Olee1-like protein (166 aa).

Positions 1–23 (MAKSIIIQAPALCFLSLLGFAYS) are cleaved as a signal peptide. 3 disulfide bridges follow: Cys35/Cys106, Cys38/Cys150, and Cys59/Cys94.

It belongs to the Ole e I family.

It is found in the secreted. The sequence is that of Olee1-like protein from Betula pendula (European white birch).